The sequence spans 501 residues: L-ornithine N(5)-monooxygenase (501 aa).

The segment covering 1–16 has biased composition (low complexity); that stretch reads MNGTSTTGNGFTNGTN. Residues 1 to 40 form a disordered region; the sequence is MNGTSTTGNGFTNGTNYPVPKLELQPETTSTSPTRAQTHP. The segment covering 26 to 37 has biased composition (polar residues); it reads PETTSTSPTRAQ. FAD-binding positions include 92 to 100 and Gln111; that span reads EKQSNFAWH. Lys116 is a substrate binding site. Val177 is an FAD binding site. Position 263–266 (263–266) interacts with NADP(+); that stretch reads SGQS. Residues 304–307 and Asn334 each bind substrate; that span reads NELF. Residue 334-336 participates in NADP(+) binding; sequence NYS. Residue 476-478 participates in FAD binding; that stretch reads SLL. Ser479 contributes to the substrate binding site.

This sequence belongs to the lysine N(6)-hydroxylase/L-ornithine N(5)-oxygenase family. Homotetramer. It depends on FAD as a cofactor.

The catalysed reaction is L-ornithine + NADPH + O2 = N(5)-hydroxy-L-ornithine + NADP(+) + H2O. The enzyme catalyses L-ornithine + NADH + O2 = N(5)-hydroxy-L-ornithine + NAD(+) + H2O. Its pathway is siderophore biosynthesis. In terms of biological role, L-ornithine N(5)-monooxygenase; part of the siderophore biosynthetic pathway. Arthroderma benhamiae produces 2 types of extracellular siderophores, ferrichrome C and ferricrocin. The biosynthesis of these siderophores depends on the hydroxylation of ornithine to N(5)-hydroxyornithine, catalyzed by the monooxygenase sidA. The structure of ferricrocin differs from ferrichrome C only by a serine for alanine substitution and the assembly of both siderophores is suggested to be performed by the nonribosomal peptide synthase (NRPS) sidC. In Arthroderma benhamiae (strain ATCC MYA-4681 / CBS 112371) (Trichophyton mentagrophytes), this protein is L-ornithine N(5)-monooxygenase.